Here is a 186-residue protein sequence, read N- to C-terminus: Akirin-1 (186 aa).

The disordered stretch occupies residues 1-64; sequence MACGATLKRS…PLPQLGGDRR (64 aa). Residues 22–27 carry the Nuclear localization signal motif; it reads PKRRRC. Residues 49-60 are compositionally biased toward low complexity; sequence QQGQQQPLPQLG. The short motif at 183–186 is the SYVS motif element; the sequence is SYVS.

The protein belongs to the akirin family.

It localises to the nucleus. In terms of biological role, molecular adapter that acts as a bridge between proteins, and which is involved skeletal muscle development. Functions as a signal transducer for MSTN during skeletal muscle regeneration and myogenesis. This Xenopus tropicalis (Western clawed frog) protein is Akirin-1.